An 87-amino-acid polypeptide reads, in one-letter code: Large ribosomal subunit protein bL28 (87 aa).

Belongs to the bacterial ribosomal protein bL28 family.

The sequence is that of Large ribosomal subunit protein bL28 from Akkermansia muciniphila (strain ATCC BAA-835 / DSM 22959 / JCM 33894 / BCRC 81048 / CCUG 64013 / CIP 107961 / Muc).